A 173-amino-acid chain; its full sequence is Crossover junction endodeoxyribonuclease RuvC (173 aa).

Residues Asp8, Glu67, and Asp139 contribute to the active site. Positions 8, 67, and 139 each coordinate Mg(2+).

The protein belongs to the RuvC family. As to quaternary structure, homodimer which binds Holliday junction (HJ) DNA. The HJ becomes 2-fold symmetrical on binding to RuvC with unstacked arms; it has a different conformation from HJ DNA in complex with RuvA. In the full resolvosome a probable DNA-RuvA(4)-RuvB(12)-RuvC(2) complex forms which resolves the HJ. It depends on Mg(2+) as a cofactor.

It localises to the cytoplasm. The catalysed reaction is Endonucleolytic cleavage at a junction such as a reciprocal single-stranded crossover between two homologous DNA duplexes (Holliday junction).. Functionally, the RuvA-RuvB-RuvC complex processes Holliday junction (HJ) DNA during genetic recombination and DNA repair. Endonuclease that resolves HJ intermediates. Cleaves cruciform DNA by making single-stranded nicks across the HJ at symmetrical positions within the homologous arms, yielding a 5'-phosphate and a 3'-hydroxyl group; requires a central core of homology in the junction. The consensus cleavage sequence is 5'-(A/T)TT(C/G)-3'. Cleavage occurs on the 3'-side of the TT dinucleotide at the point of strand exchange. HJ branch migration catalyzed by RuvA-RuvB allows RuvC to scan DNA until it finds its consensus sequence, where it cleaves and resolves the cruciform DNA. This chain is Crossover junction endodeoxyribonuclease RuvC, found in Shewanella pealeana (strain ATCC 700345 / ANG-SQ1).